Here is a 1299-residue protein sequence, read N- to C-terminus: DNA-directed RNA polymerase subunit beta' (1299 aa).

Residues Cys60, Cys62, Cys75, and Cys78 each contribute to the Zn(2+) site. Residues Asp535, Asp537, and Asp539 each contribute to the Mg(2+) site. Zn(2+)-binding residues include Cys877, Cys954, Cys961, and Cys964.

It belongs to the RNA polymerase beta' chain family. The RNAP catalytic core consists of 2 alpha, 1 beta, 1 beta' and 1 omega subunit. When a sigma factor is associated with the core the holoenzyme is formed, which can initiate transcription. Mg(2+) is required as a cofactor. It depends on Zn(2+) as a cofactor.

It catalyses the reaction RNA(n) + a ribonucleoside 5'-triphosphate = RNA(n+1) + diphosphate. Functionally, DNA-dependent RNA polymerase catalyzes the transcription of DNA into RNA using the four ribonucleoside triphosphates as substrates. This chain is DNA-directed RNA polymerase subunit beta', found in Paenarthrobacter aurescens (strain TC1).